Consider the following 546-residue polypeptide: Chaperonin GroEL (546 aa).

ATP is bound by residues T30–P33, K51, D87–T91, G415, N479–A481, and D495.

This sequence belongs to the chaperonin (HSP60) family. As to quaternary structure, forms a cylinder of 14 subunits composed of two heptameric rings stacked back-to-back. Interacts with the co-chaperonin GroES.

It is found in the cytoplasm. It carries out the reaction ATP + H2O + a folded polypeptide = ADP + phosphate + an unfolded polypeptide.. Together with its co-chaperonin GroES, plays an essential role in assisting protein folding. The GroEL-GroES system forms a nano-cage that allows encapsulation of the non-native substrate proteins and provides a physical environment optimized to promote and accelerate protein folding. The polypeptide is Chaperonin GroEL (Pseudomonas entomophila (strain L48)).